Here is a 304-residue protein sequence, read N- to C-terminus: Ribosomal RNA large subunit methyltransferase F (304 aa).

It belongs to the methyltransferase superfamily. METTL16/RlmF family.

The protein resides in the cytoplasm. It catalyses the reaction adenosine(1618) in 23S rRNA + S-adenosyl-L-methionine = N(6)-methyladenosine(1618) in 23S rRNA + S-adenosyl-L-homocysteine + H(+). Its function is as follows. Specifically methylates the adenine in position 1618 of 23S rRNA. This Klebsiella pneumoniae subsp. pneumoniae (strain ATCC 700721 / MGH 78578) protein is Ribosomal RNA large subunit methyltransferase F.